The primary structure comprises 526 residues: Peptide chain release factor 3 (526 aa).

One can recognise a tr-type G domain in the interval 9 to 277; the sequence is DLRRTFAIIS…GLTKWAPKPL (269 aa). GTP is bound by residues 18 to 25, 86 to 90, and 140 to 143; these read SHPDAGKT, DTPGH, and NKMD.

This sequence belongs to the TRAFAC class translation factor GTPase superfamily. Classic translation factor GTPase family. PrfC subfamily.

The protein localises to the cytoplasm. Functionally, increases the formation of ribosomal termination complexes and stimulates activities of RF-1 and RF-2. It binds guanine nucleotides and has strong preference for UGA stop codons. It may interact directly with the ribosome. The stimulation of RF-1 and RF-2 is significantly reduced by GTP and GDP, but not by GMP. In Colwellia psychrerythraea (strain 34H / ATCC BAA-681) (Vibrio psychroerythus), this protein is Peptide chain release factor 3.